A 658-amino-acid polypeptide reads, in one-letter code: Probable mitochondrial Rho GTPase gemA (658 aa).

Topologically, residues 1 to 633 (MKNNIKVILI…NGSNGSNNSN (633 aa)) are cytoplasmic. The Miro 1 domain occupies 2–175 (KNNIKVILIG…LYASQTSVFF (174 aa)). Residues 11-18 (GDEQVGKS), 57-62 (DTFDDG), and 118-121 (NKLD) contribute to the GTP site. EF-hand domains are found at residues 191–226 (GCERALKRIFKLCDHDNDGSLSEEEINYFQTKCGHE) and 311–346 (MGNEFFKSLFEKYDSDSDGVLSSFDLVSLFSTTPKI). D204, D206, D208, S210, E215, D324, D326, D328, and D335 together coordinate Ca(2+). The Miro 2 domain maps to 420–616 (RNIVNCYVFG…YHEMMETIVN (197 aa)). GTP is bound by residues 429 to 436 (GAEAVGKT), 466 to 468 (LLK), and 530 to 533 (TKNN). The interval 532-575 (NNNNNNNNNNNNNNNNNNNNLNNNNNNINNNNNNNNNNTTTTNA) is disordered. The helical; Anchor for type IV membrane protein transmembrane segment at 634 to 656 (ILTYLVIAAGVAGVGLLLSKYLA) threads the bilayer. Residues 657–658 (KK) lie on the Mitochondrial intermembrane side of the membrane.

Belongs to the mitochondrial Rho GTPase family.

It is found in the mitochondrion outer membrane. Functionally, mitochondrial GTPase involved in mitochondrial trafficking. Probably involved in control of anterograde transport of mitochondria and their subcellular distribution. This is Probable mitochondrial Rho GTPase gemA (gemA) from Dictyostelium discoideum (Social amoeba).